The following is a 134-amino-acid chain: Protein NrdI (134 aa).

The protein belongs to the NrdI family.

Probably involved in ribonucleotide reductase function. This is Protein NrdI from Chromohalobacter salexigens (strain ATCC BAA-138 / DSM 3043 / CIP 106854 / NCIMB 13768 / 1H11).